Consider the following 141-residue polypeptide: MAYRLITQVVVVGSRVLGRAFAEAYKQAAASSQYQRAQQKNGNAATGRASLTSGMTLDEACKILNVNKPADGTAANMEEVMERFKRLFDANDPEKGGSFYLQSKVVRARERLEAEIKPKMEEKQAEEEVKEGWNPKIYKDR.

The tract at residues 59-117 (EACKILNVNKPADGTAANMEEVMERFKRLFDANDPEKGGSFYLQSKVVRARERLEAEIK) is J-like. The interval 119–141 (KMEEKQAEEEVKEGWNPKIYKDR) is disordered.

The protein belongs to the TIM16/PAM16 family. In terms of assembly, heterodimer with tim14/pam18. Component of the PAM complex, at least composed of hsp70-5/ssc1, grpe/mge1, tim44, un-4/pam16, pam17 and tim14/pam18.

The protein localises to the mitochondrion inner membrane. In terms of biological role, essential component of the PAM complex, a complex required for the translocation of transit peptide-containing proteins from the inner membrane into the mitochondrial matrix in an ATP-dependent manner. In the complex, it is required to regulate activity of mtHSP70 (hsp70-5) via its interaction with tim14/pam18. May act by positioning tim14/pam18 in juxtaposition to mtHSP70 at the translocon to maximize ATPase stimulation. The protein is Mitochondrial import inner membrane translocase subunit tim16 (un-4) of Neurospora crassa (strain ATCC 24698 / 74-OR23-1A / CBS 708.71 / DSM 1257 / FGSC 987).